Consider the following 500-residue polypeptide: Protein nucleotidyltransferase YdiU (500 aa).

8 residues coordinate ATP: G96, G98, R99, K119, D131, G132, R182, and R189. D258 functions as the Proton acceptor in the catalytic mechanism. Mg(2+) contacts are provided by N259 and D268. D268 lines the ATP pocket.

This sequence belongs to the SELO family. Requires Mg(2+) as cofactor. The cofactor is Mn(2+).

It carries out the reaction L-seryl-[protein] + ATP = 3-O-(5'-adenylyl)-L-seryl-[protein] + diphosphate. The catalysed reaction is L-threonyl-[protein] + ATP = 3-O-(5'-adenylyl)-L-threonyl-[protein] + diphosphate. It catalyses the reaction L-tyrosyl-[protein] + ATP = O-(5'-adenylyl)-L-tyrosyl-[protein] + diphosphate. The enzyme catalyses L-histidyl-[protein] + UTP = N(tele)-(5'-uridylyl)-L-histidyl-[protein] + diphosphate. It carries out the reaction L-seryl-[protein] + UTP = O-(5'-uridylyl)-L-seryl-[protein] + diphosphate. The catalysed reaction is L-tyrosyl-[protein] + UTP = O-(5'-uridylyl)-L-tyrosyl-[protein] + diphosphate. Its function is as follows. Nucleotidyltransferase involved in the post-translational modification of proteins. It can catalyze the addition of adenosine monophosphate (AMP) or uridine monophosphate (UMP) to a protein, resulting in modifications known as AMPylation and UMPylation. In Rhizobium leguminosarum bv. trifolii (strain WSM2304), this protein is Protein nucleotidyltransferase YdiU.